Here is a 400-residue protein sequence, read N- to C-terminus: MNKKTIRDVDWAGKRALVRVDFNVPLDDQGQITDDTRIRAALPTIRYLLEHGASVVLMSHLGRPKGKPNPKYSLRPVVERLFELLPEAKEVKKTEAITGPAAEAAVAMLKPGQVLVLENTRFDPREEPNDPAMAAELAKLGDVFVNDAFGTAHRANASTEGVAHYLPAVAGFLMEKELTYIGGALNNPQRPFVTVIGGAKISDKIGVIENLLGKVDALLIGGGMANTFLLAKGLNVGDSLVEPDSVPVAQQLMARAEERGARLLLPVDVVIADAFSADAQRQVVDVSDIPAGWRVLDIGPKTIERYSAEIRAARTVIWNGPMGVFELEPFAVGTRAIAQAMAEAAANGAITIVGGGDSVAAVEQAGLADKMSHVSTGGGASLELLEGRVLPGVAALQDAE.

Substrate is bound by residues 21–23, R37, 60–63, R121, and R154; these read DFN and HLGR. ATP contacts are provided by residues K204, E326, and 355–358; that span reads GGDS.

It belongs to the phosphoglycerate kinase family. As to quaternary structure, monomer.

Its subcellular location is the cytoplasm. The enzyme catalyses (2R)-3-phosphoglycerate + ATP = (2R)-3-phospho-glyceroyl phosphate + ADP. It functions in the pathway carbohydrate degradation; glycolysis; pyruvate from D-glyceraldehyde 3-phosphate: step 2/5. The polypeptide is Phosphoglycerate kinase (Chloroflexus aurantiacus (strain ATCC 29366 / DSM 635 / J-10-fl)).